We begin with the raw amino-acid sequence, 157 residues long: Polyferredoxin protein VhcB (157 aa).

4Fe-4S ferredoxin-type domains follow at residues 23–52, 62–92, and 100–129; these read NGISWDREKCEYCGPCAIKCPNDAIMVVNP, KTERANEFKMCDLCGTCVSACPTEALQMGKI, and DRIEFTPSLCDSCGACVEICPQNVLKLNEE. Residues Cys-32, Cys-35, Cys-38, Cys-42, Cys-72, Cys-75, Cys-78, Cys-82, Cys-109, Cys-112, Cys-115, Cys-119, Cys-136, Cys-139, Cys-142, and Cys-146 each contribute to the [4Fe-4S] cluster site.

The cofactor is [4Fe-4S] cluster.

The sequence is that of Polyferredoxin protein VhcB (vhcB) from Methanococcus voltae.